The sequence spans 474 residues: tRNA-2-methylthio-N(6)-dimethylallyladenosine synthase (474 aa).

Residues 3–120 (KKLHIKTWGC…LPEMINSVRG (118 aa)) form the MTTase N-terminal domain. The [4Fe-4S] cluster site is built by Cys12, Cys49, Cys83, Cys157, Cys161, and Cys164. A Radical SAM core domain is found at 143–375 (RAEGPTAFVS…QERINQQAMA (233 aa)). The TRAM domain occupies 378 to 441 (RRMLGTTQRI…PNSLRGKVVR (64 aa)).

It belongs to the methylthiotransferase family. MiaB subfamily. As to quaternary structure, monomer. [4Fe-4S] cluster serves as cofactor.

It localises to the cytoplasm. It carries out the reaction N(6)-dimethylallyladenosine(37) in tRNA + (sulfur carrier)-SH + AH2 + 2 S-adenosyl-L-methionine = 2-methylsulfanyl-N(6)-dimethylallyladenosine(37) in tRNA + (sulfur carrier)-H + 5'-deoxyadenosine + L-methionine + A + S-adenosyl-L-homocysteine + 2 H(+). In terms of biological role, catalyzes the methylthiolation of N6-(dimethylallyl)adenosine (i(6)A), leading to the formation of 2-methylthio-N6-(dimethylallyl)adenosine (ms(2)i(6)A) at position 37 in tRNAs that read codons beginning with uridine. In Salmonella enteritidis PT4 (strain P125109), this protein is tRNA-2-methylthio-N(6)-dimethylallyladenosine synthase.